The chain runs to 147 residues: Large ribosomal subunit protein uL13 (147 aa).

Belongs to the universal ribosomal protein uL13 family. As to quaternary structure, part of the 50S ribosomal subunit.

Functionally, this protein is one of the early assembly proteins of the 50S ribosomal subunit, although it is not seen to bind rRNA by itself. It is important during the early stages of 50S assembly. The protein is Large ribosomal subunit protein uL13 of Pseudarthrobacter chlorophenolicus (strain ATCC 700700 / DSM 12829 / CIP 107037 / JCM 12360 / KCTC 9906 / NCIMB 13794 / A6) (Arthrobacter chlorophenolicus).